The sequence spans 267 residues: Eukaryotic translation initiation factor 3 subunit J (267 aa).

Disordered stretches follow at residues 1 to 128 (MAPS…DIDL) and 220 to 241 (KMRE…KTKV). Acidic residues predominate over residues 28–46 (DEEEEDVLDSWDAAEDSEV). A coiled-coil region spans residues 44 to 96 (SEVEREKAAKAAAAAAKAEAEAAAKKKSKAQRIEEHKQERKKQAEANESDEDS). Basic and acidic residues predominate over residues 74-88 (QRIEEHKQERKKQAE). A compositionally biased stretch (acidic residues) spans 90–100 (NESDEDSDEDE). 2 stretches are compositionally biased toward basic and acidic residues: residues 108-121 (RRTE…HAQD) and 220-231 (KMREERAADKGN).

Belongs to the eIF-3 subunit J family. In terms of assembly, component of the eukaryotic translation initiation factor 3 (eIF-3) complex.

It localises to the cytoplasm. Component of the eukaryotic translation initiation factor 3 (eIF-3) complex, which is involved in protein synthesis of a specialized repertoire of mRNAs and, together with other initiation factors, stimulates binding of mRNA and methionyl-tRNAi to the 40S ribosome. The eIF-3 complex specifically targets and initiates translation of a subset of mRNAs involved in cell proliferation. In Neosartorya fischeri (strain ATCC 1020 / DSM 3700 / CBS 544.65 / FGSC A1164 / JCM 1740 / NRRL 181 / WB 181) (Aspergillus fischerianus), this protein is Eukaryotic translation initiation factor 3 subunit J (hcr1).